A 434-amino-acid chain; its full sequence is Asparagine--tRNA ligase (434 aa).

Belongs to the class-II aminoacyl-tRNA synthetase family.

It localises to the cytoplasm. It carries out the reaction tRNA(Asn) + L-asparagine + ATP = L-asparaginyl-tRNA(Asn) + AMP + diphosphate + H(+). The chain is Asparagine--tRNA ligase (asnS) from Pyrococcus furiosus (strain ATCC 43587 / DSM 3638 / JCM 8422 / Vc1).